Consider the following 737-residue polypeptide: Protein bicaudal D homolog (737 aa).

Coiled coils occupy residues 1–255 (MAES…RNAE), 292–319 (GSSD…EKIF), and 547–684 (AENE…DRDR). The disordered stretch occupies residues 72–97 (YRSQHQRSTRSELENEESLLEESSAK). The tract at residues 686–737 (VFKRSSTRAPTRETYQPPRAVRYPGSTTTAQQPAPSSSGGSRGGPRRGDNQQ) is disordered. A compositionally biased stretch (polar residues) spans 710-719 (GSTTTAQQPA).

This sequence belongs to the BicD family. In terms of assembly, component of a dynein-regulating complex composed of at least bicd-1, dlc-1 and egal-1. Interacts with egal-1 and unc-83. Expressed in the excretory cell, body wall muscles, vulval muscle cells, PVD and FLP sensory neurons and AVF interneurons.

It localises to the nucleus envelope. The protein localises to the perikaryon. The protein resides in the cell projection. Its subcellular location is the dendrite. Its function is as follows. Part of a complex with dlc-1 and egal-1, which is recruited to the nuclear envelope by unc-83, where in turn, it recruits dynein to the nuclear surface and regulates nuclear migration in hypodermal precursor cells. Required for the formation of dendritic branches of PVD sensory neurons. In Caenorhabditis elegans, this protein is Protein bicaudal D homolog.